A 122-amino-acid chain; its full sequence is Lectin A (122 aa).

Tyr38 contacts Ca(2+). Glu44, Gln57, and Asp96 together coordinate an alpha-D-galactoside. Residues Asp96, Thr100, Asp103, and Asn104 each contribute to the Ca(2+) site. Residue Asp103 coordinates an alpha-D-galactoside.

Belongs to the LecA/PllA lectin family. As to quaternary structure, homotetramer.

Its function is as follows. Lectin that specifically binds alpha-galactoside-terminating glycoconjugates. Shows high apparent binding to the alpha-Gal epitope (Gal-alpha-1,3-Gal-beta-1,4-GlcNAc terminating glycans) as well as to Gal-alpha-1,4-GlcNAc and Gal-alpha-1,3-GalNAc. Gal-alpha-1,3-GalNAc may be one natural ligand bound by PllA both in the nematode symbiont and in infected insects. The polypeptide is Lectin A (Photorhabdus laumondii subsp. laumondii (strain DSM 15139 / CIP 105565 / TT01) (Photorhabdus luminescens subsp. laumondii)).